The sequence spans 96 residues: Large ribosomal subunit protein bL28 (96 aa).

Belongs to the bacterial ribosomal protein bL28 family.

The protein is Large ribosomal subunit protein bL28 of Parvibaculum lavamentivorans (strain DS-1 / DSM 13023 / NCIMB 13966).